The following is a 199-amino-acid chain: Protein GrpE (199 aa).

Residues 1-50 form a disordered region; that stretch reads MAKKSTRTTPEDSQASTTDSAATSTASEATQAATSATDDQAEQTTAVDPT. Over residues 11–46 the composition is skewed to low complexity; sequence EDSQASTTDSAATSTASEATQAATSATDDQAEQTTA.

This sequence belongs to the GrpE family. Homodimer.

The protein localises to the cytoplasm. Functionally, participates actively in the response to hyperosmotic and heat shock by preventing the aggregation of stress-denatured proteins, in association with DnaK and GrpE. It is the nucleotide exchange factor for DnaK and may function as a thermosensor. Unfolded proteins bind initially to DnaJ; upon interaction with the DnaJ-bound protein, DnaK hydrolyzes its bound ATP, resulting in the formation of a stable complex. GrpE releases ADP from DnaK; ATP binding to DnaK triggers the release of the substrate protein, thus completing the reaction cycle. Several rounds of ATP-dependent interactions between DnaJ, DnaK and GrpE are required for fully efficient folding. In Lactiplantibacillus plantarum (strain ATCC BAA-793 / NCIMB 8826 / WCFS1) (Lactobacillus plantarum), this protein is Protein GrpE.